The chain runs to 149 residues: Small ribosomal subunit protein bS18c (149 aa).

The interval 1–23 is disordered; it reads MDKITGPFRKSKKSFRKPLPPIQ.

This sequence belongs to the bacterial ribosomal protein bS18 family. In terms of assembly, part of the 30S ribosomal subunit.

It localises to the plastid. This chain is Small ribosomal subunit protein bS18c, found in Cuscuta obtusiflora (Peruvian dodder).